The following is a 118-amino-acid chain: Large ribosomal subunit protein bL20 (118 aa).

The protein belongs to the bacterial ribosomal protein bL20 family.

Functionally, binds directly to 23S ribosomal RNA and is necessary for the in vitro assembly process of the 50S ribosomal subunit. It is not involved in the protein synthesizing functions of that subunit. This is Large ribosomal subunit protein bL20 from Rhodopirellula baltica (strain DSM 10527 / NCIMB 13988 / SH1).